The sequence spans 366 residues: tRNA-specific 2-thiouridylase MnmA (366 aa).

ATP is bound by residues 6–13 (AMSGGVDS) and Leu-32. Catalysis depends on Cys-101, which acts as the Nucleophile. A disulfide bridge links Cys-101 with Cys-197. Gly-125 provides a ligand contact to ATP. Positions 147–149 (KDQ) are interaction with tRNA. The active-site Cysteine persulfide intermediate is Cys-197.

Belongs to the MnmA/TRMU family.

The protein localises to the cytoplasm. It carries out the reaction S-sulfanyl-L-cysteinyl-[protein] + uridine(34) in tRNA + AH2 + ATP = 2-thiouridine(34) in tRNA + L-cysteinyl-[protein] + A + AMP + diphosphate + H(+). In terms of biological role, catalyzes the 2-thiolation of uridine at the wobble position (U34) of tRNA, leading to the formation of s(2)U34. The polypeptide is tRNA-specific 2-thiouridylase MnmA (Cutibacterium acnes (strain DSM 16379 / KPA171202) (Propionibacterium acnes)).